A 215-amino-acid chain; its full sequence is Cytochrome b6 (215 aa).

The helical transmembrane segment at Ile-32–Phe-52 threads the bilayer. Heme c is bound at residue Cys-35. Residues His-86 and His-100 each coordinate heme b. 3 helical membrane-spanning segments follow: residues Ala-90–Phe-110, Leu-116–Tyr-136, and Leu-186–Ile-206. Heme b is bound by residues His-187 and His-202.

It belongs to the cytochrome b family. PetB subfamily. As to quaternary structure, the 4 large subunits of the cytochrome b6-f complex are cytochrome b6, subunit IV (17 kDa polypeptide, PetD), cytochrome f and the Rieske protein, while the 4 small subunits are PetG, PetL, PetM and PetN. The complex functions as a dimer. Requires heme b as cofactor. The cofactor is heme c.

It localises to the plastid. Its subcellular location is the chloroplast thylakoid membrane. Functionally, component of the cytochrome b6-f complex, which mediates electron transfer between photosystem II (PSII) and photosystem I (PSI), cyclic electron flow around PSI, and state transitions. The protein is Cytochrome b6 of Liriodendron tulipifera (Tuliptree).